The sequence spans 170 residues: Phosphopantetheine adenylyltransferase (170 aa).

Thr-9 provides a ligand contact to substrate. ATP is bound by residues 9–10 (TF) and His-17. 3 residues coordinate substrate: Lys-41, Leu-73, and Arg-87. Residues 88–90 (GLR), Glu-98, and 123–129 (YQFISGT) contribute to the ATP site.

The protein belongs to the bacterial CoaD family. As to quaternary structure, homohexamer. Requires Mg(2+) as cofactor.

Its subcellular location is the cytoplasm. The catalysed reaction is (R)-4'-phosphopantetheine + ATP + H(+) = 3'-dephospho-CoA + diphosphate. It participates in cofactor biosynthesis; coenzyme A biosynthesis; CoA from (R)-pantothenate: step 4/5. Its function is as follows. Reversibly transfers an adenylyl group from ATP to 4'-phosphopantetheine, yielding dephospho-CoA (dPCoA) and pyrophosphate. The chain is Phosphopantetheine adenylyltransferase from Bordetella petrii (strain ATCC BAA-461 / DSM 12804 / CCUG 43448).